Reading from the N-terminus, the 72-residue chain is Disintegrin cotiarin (72 aa).

Positions 1-72 (EAGEECDCGA…SADCPRNRFH (72 aa)) constitute a Disintegrin domain. Intrachain disulfides connect cysteine 6/cysteine 21, cysteine 8/cysteine 16, cysteine 15/cysteine 38, cysteine 29/cysteine 35, cysteine 34/cysteine 59, and cysteine 47/cysteine 66. The Cell attachment site signature appears at 51–53 (RGD). A disordered region spans residues 51–72 (RGDNPDDRCTGQSADCPRNRFH).

Belongs to the venom metalloproteinase (M12B) family. P-II subfamily. P-IIa sub-subfamily. As to quaternary structure, monomer. As to expression, expressed by the venom gland.

The protein resides in the secreted. In terms of biological role, inhibits fibrinogen interaction with platelets. Acts by binding to alpha-IIb/beta-3 (ITGA2B/ITGB3) on the platelet surface and inhibits aggregation induced by ADP, thrombin, platelet-activating factor and collagen. The chain is Disintegrin cotiarin from Bothrops cotiara (Cotiara).